Here is a 329-residue protein sequence, read N- to C-terminus: GTP 3',8-cyclase (329 aa).

Residues 8–234 form the Radical SAM core domain; it reads AFARKFYYLR…QLRSRADGPA (227 aa). Position 17 (arginine 17) interacts with GTP. Residues cysteine 24 and cysteine 28 each contribute to the [4Fe-4S] cluster site. Tyrosine 30 contacts S-adenosyl-L-methionine. Position 31 (cysteine 31) interacts with [4Fe-4S] cluster. Arginine 68 contributes to the GTP binding site. Glycine 72 lines the S-adenosyl-L-methionine pocket. Position 99 (threonine 99) interacts with GTP. S-adenosyl-L-methionine is bound at residue serine 123. Lysine 160 contributes to the GTP binding site. Residue methionine 194 participates in S-adenosyl-L-methionine binding. Residues cysteine 257 and cysteine 260 each coordinate [4Fe-4S] cluster. A GTP-binding site is contributed by 262–264; that stretch reads RLR. Cysteine 274 provides a ligand contact to [4Fe-4S] cluster.

Belongs to the radical SAM superfamily. MoaA family. In terms of assembly, monomer and homodimer. [4Fe-4S] cluster serves as cofactor.

It catalyses the reaction GTP + AH2 + S-adenosyl-L-methionine = (8S)-3',8-cyclo-7,8-dihydroguanosine 5'-triphosphate + 5'-deoxyadenosine + L-methionine + A + H(+). It participates in cofactor biosynthesis; molybdopterin biosynthesis. Functionally, catalyzes the cyclization of GTP to (8S)-3',8-cyclo-7,8-dihydroguanosine 5'-triphosphate. The chain is GTP 3',8-cyclase from Cronobacter sakazakii (strain ATCC BAA-894) (Enterobacter sakazakii).